The following is a 260-amino-acid chain: Cystine transporter (260 aa).

A PQ-loop 1 domain is found at Met-1 to Asp-67. Helical transmembrane passes span Ile-7–Trp-28, Phe-40–Trp-62, Phe-81–Ala-102, Trp-118–Met-138, and Thr-151–Thr-175. Residues Lys-162–Asp-212 form the PQ-loop 2 domain. The N-linked (GlcNAc...) asparagine glycan is linked to Asn-177. 2 helical membrane passes run Cys-185 to Leu-205 and Val-227 to Tyr-247.

The protein belongs to the cystinosin family.

The protein resides in the endosome membrane. It localises to the vacuole membrane. The catalysed reaction is L-cystine(out) + H(+)(out) = L-cystine(in) + H(+)(in). In terms of biological role, cystine/H(+) symporter that mediates export of cystine, the oxidized dimer of cysteine, from vacuoles/endodomes. This is Cystine transporter (ERS1) from Saccharomyces cerevisiae (strain ATCC 204508 / S288c) (Baker's yeast).